Reading from the N-terminus, the 166-residue chain is uncharacterized protein (166 aa).

Positions 1–58 (MSSEITEGDLQKFHDEHFNAKAVNLWNVAFAQNDRGGNSESANVEYTQSVERYPDGTI) are may interact with smn1.

Part of the core SMN complex at least composed of smn1, yip11/gem2, gem6, gem7 and gem8. Interacts with smn1; the interaction is direct. Interacts with gem7; the interaction is direct.

The protein localises to the cytoplasm. The protein resides in the nucleus. Its function is as follows. The SMN complex catalyzes the assembly of small nuclear ribonucleoproteins (snRNPs), the building blocks of the spliceosome, and thereby plays an important role in the splicing of cellular pre-mRNAs. Most spliceosomal snRNPs contain a common set of Sm proteins SNRPB, SNRPD1, SNRPD2, SNRPD3, SNRPE, SNRPF and SNRPG that assemble in a heptameric protein ring on the Sm site of the small nuclear RNA to form the core snRNP (Sm core). In the cytosol, the Sm proteins SNRPD1, SNRPD2, SNRPE, SNRPF and SNRPG are trapped in an inactive 6S pICln-Sm complex by the chaperone CLNS1A that controls the assembly of the core snRNP. To assemble core snRNPs, the SMN complex accepts the trapped 5Sm proteins from CLNS1A forming an intermediate. Binding of snRNA inside 5Sm triggers eviction of the SMN complex, thereby allowing binding of SNRPD3 and SNRPB to complete assembly of the core snRNP. This is an uncharacterized protein from Schizosaccharomyces pombe (strain 972 / ATCC 24843) (Fission yeast).